Reading from the N-terminus, the 394-residue chain is Tryptophan synthase beta chain (394 aa).

N6-(pyridoxal phosphate)lysine is present on Lys84.

The protein belongs to the TrpB family. Tetramer of two alpha and two beta chains. The cofactor is pyridoxal 5'-phosphate.

It carries out the reaction (1S,2R)-1-C-(indol-3-yl)glycerol 3-phosphate + L-serine = D-glyceraldehyde 3-phosphate + L-tryptophan + H2O. It participates in amino-acid biosynthesis; L-tryptophan biosynthesis; L-tryptophan from chorismate: step 5/5. Functionally, the beta subunit is responsible for the synthesis of L-tryptophan from indole and L-serine. In Clostridium acetobutylicum (strain ATCC 824 / DSM 792 / JCM 1419 / IAM 19013 / LMG 5710 / NBRC 13948 / NRRL B-527 / VKM B-1787 / 2291 / W), this protein is Tryptophan synthase beta chain.